Reading from the N-terminus, the 432-residue chain is Cysteine desulfurase, mitosomal (432 aa).

Pyridoxal 5'-phosphate is bound by residues 102–103 (AT), glutamine 212, and 232–234 (CAH). Lysine 235 carries the N6-(pyridoxal phosphate)lysine modification. Threonine 272 lines the pyridoxal 5'-phosphate pocket. Cysteine 357 acts as the Cysteine persulfide intermediate in catalysis. Cysteine 357 provides a ligand contact to [2Fe-2S] cluster.

The protein belongs to the class-V pyridoxal-phosphate-dependent aminotransferase family. NifS/IscS subfamily. The cofactor is pyridoxal 5'-phosphate.

It localises to the mitosome. It catalyses the reaction (sulfur carrier)-H + L-cysteine = (sulfur carrier)-SH + L-alanine. Functionally, catalyzes the removal of elemental sulfur from cysteine to produce alanine. It supplies the inorganic sulfur for iron-sulfur (Fe-S) clusters in mitosomes. The sequence is that of Cysteine desulfurase, mitosomal from Encephalitozoon cuniculi (strain GB-M1) (Microsporidian parasite).